Consider the following 389-residue polypeptide: Altered inheritance of mitochondria protein 6 (389 aa).

Positions 1–23 are cleaved as a signal peptide; the sequence is MMLLSQPGIWLLVSLFLCSSVNS.

It belongs to the AIM6 family.

The chain is Altered inheritance of mitochondria protein 6 (AIM6) from Eremothecium gossypii (strain ATCC 10895 / CBS 109.51 / FGSC 9923 / NRRL Y-1056) (Yeast).